Here is a 334-residue protein sequence, read N- to C-terminus: GTP 3',8-cyclase (334 aa).

Residues 11 to 235 (GFNRKVDYLR…VESAESSQGP (225 aa)) enclose the Radical SAM core domain. R20 is a binding site for GTP. Residues C27 and C31 each coordinate [4Fe-4S] cluster. Position 33 (Y33) interacts with S-adenosyl-L-methionine. C34 is a binding site for [4Fe-4S] cluster. Residue R69 coordinates GTP. G73 contacts S-adenosyl-L-methionine. T100 contacts GTP. Residue S124 coordinates S-adenosyl-L-methionine. K161 is a GTP binding site. Residue M195 coordinates S-adenosyl-L-methionine. The [4Fe-4S] cluster site is built by C260 and C263. 265–267 (RVR) serves as a coordination point for GTP. C277 contributes to the [4Fe-4S] cluster binding site.

Belongs to the radical SAM superfamily. MoaA family. As to quaternary structure, monomer and homodimer. The cofactor is [4Fe-4S] cluster.

It catalyses the reaction GTP + AH2 + S-adenosyl-L-methionine = (8S)-3',8-cyclo-7,8-dihydroguanosine 5'-triphosphate + 5'-deoxyadenosine + L-methionine + A + H(+). Its pathway is cofactor biosynthesis; molybdopterin biosynthesis. Catalyzes the cyclization of GTP to (8S)-3',8-cyclo-7,8-dihydroguanosine 5'-triphosphate. The sequence is that of GTP 3',8-cyclase from Pseudomonas entomophila (strain L48).